Here is a 107-residue protein sequence, read N- to C-terminus: Large ribosomal subunit protein mL55 (107 aa).

A mitochondrion-targeting transit peptide spans 1–16 (MLLKQLPQAVQQIRCI).

The protein belongs to the mitochondrion-specific ribosomal protein mL55 family. In terms of assembly, component of the mitochondrial ribosome large subunit (39S) which comprises a 16S rRNA and about 50 distinct proteins. As to expression, ubiquitously expressed (at protein level).

The protein localises to the mitochondrion. Involved in mitochondrial biogenesis and G2/M phase cell cycle progression. In Drosophila melanogaster (Fruit fly), this protein is Large ribosomal subunit protein mL55 (mRpL55).